The chain runs to 95 residues: Co-chaperonin GroES (95 aa).

The protein belongs to the GroES chaperonin family. As to quaternary structure, heptamer of 7 subunits arranged in a ring. Interacts with the chaperonin GroEL.

The protein resides in the cytoplasm. Functionally, together with the chaperonin GroEL, plays an essential role in assisting protein folding. The GroEL-GroES system forms a nano-cage that allows encapsulation of the non-native substrate proteins and provides a physical environment optimized to promote and accelerate protein folding. GroES binds to the apical surface of the GroEL ring, thereby capping the opening of the GroEL channel. In Chlorobium limicola (strain DSM 245 / NBRC 103803 / 6330), this protein is Co-chaperonin GroES.